The primary structure comprises 401 residues: Leucine aminopeptidase 1 (401 aa).

The N-terminal stretch at 1 to 18 is a signal peptide; that stretch reads MKVAKASLLTILAHSVSA. Residues 19-87 constitute a propeptide that is removed on maturation; the sequence is RFLAEDEINR…GATRLRTKTK (69 aa). Asn179 carries N-linked (GlcNAc...) asparagine glycosylation. Positions 187, 206, 245, and 272 each coordinate Zn(2+). An intrachain disulfide couples Cys321 to Cys325. Position 354 (His354) interacts with Zn(2+).

It belongs to the peptidase M28 family. M28E subfamily. In terms of assembly, monomer. It depends on Zn(2+) as a cofactor.

The protein resides in the secreted. Functionally, extracellular aminopeptidase that allows assimilation of proteinaceous substrates. The polypeptide is Leucine aminopeptidase 1 (LAP1) (Colletotrichum graminicola (strain M1.001 / M2 / FGSC 10212) (Maize anthracnose fungus)).